The chain runs to 265 residues: Tryptophan 2,3-dioxygenase (265 aa).

Residues 38–42 (FIVVH) and R104 contribute to the substrate site. H223 provides a ligand contact to heme. T237 is a substrate binding site.

It belongs to the tryptophan 2,3-dioxygenase family. As to quaternary structure, homotetramer. It depends on heme as a cofactor.

It catalyses the reaction L-tryptophan + O2 = N-formyl-L-kynurenine. It functions in the pathway amino-acid degradation; L-tryptophan degradation via kynurenine pathway; L-kynurenine from L-tryptophan: step 1/2. Its function is as follows. Heme-dependent dioxygenase that catalyzes the oxidative cleavage of the L-tryptophan (L-Trp) pyrrole ring and converts L-tryptophan to N-formyl-L-kynurenine. Catalyzes the oxidative cleavage of the indole moiety. This is Tryptophan 2,3-dioxygenase from Anaeromyxobacter sp. (strain K).